We begin with the raw amino-acid sequence, 323 residues long: Malate dehydrogenase (323 aa).

NAD(+) is bound at residue 11-17 (GAAGQIA). Substrate-binding residues include R92 and R98. NAD(+) contacts are provided by residues N105, Q112, and 129–131 (VGN). N131 and R162 together coordinate substrate. H187 (proton acceptor) is an active-site residue.

Belongs to the LDH/MDH superfamily. MDH type 2 family.

It carries out the reaction (S)-malate + NAD(+) = oxaloacetate + NADH + H(+). Its function is as follows. Catalyzes the reversible oxidation of malate to oxaloacetate. The chain is Malate dehydrogenase from Corynebacterium efficiens (strain DSM 44549 / YS-314 / AJ 12310 / JCM 11189 / NBRC 100395).